The following is a 154-amino-acid chain: 6,7-dimethyl-8-ribityllumazine synthase (154 aa).

Residues 22-23, 56-58, and 80-82 contribute to the 5-amino-6-(D-ribitylamino)uracil site; these read FN, AFE, and TVI. A (2S)-2-hydroxy-3-oxobutyl phosphate-binding site is contributed by 85–86; it reads AT. The active-site Proton donor is His88. Phe113 lines the 5-amino-6-(D-ribitylamino)uracil pocket. Arg127 is a binding site for (2S)-2-hydroxy-3-oxobutyl phosphate.

This sequence belongs to the DMRL synthase family. As to quaternary structure, forms an icosahedral capsid composed of 60 subunits, arranged as a dodecamer of pentamers. Can interact with riboflavin synthase, forming a lumazine synthase/riboflavin synthase complex, also designated as 'heavy riboflavin synthase complex', which consists of a trimer of riboflavin synthase enclosed within the icosahedral structure composed of 60 subunits of 6,7-dimethyl-8-ribityllumazine synthase.

It catalyses the reaction (2S)-2-hydroxy-3-oxobutyl phosphate + 5-amino-6-(D-ribitylamino)uracil = 6,7-dimethyl-8-(1-D-ribityl)lumazine + phosphate + 2 H2O + H(+). The protein operates within cofactor biosynthesis; riboflavin biosynthesis; riboflavin from 2-hydroxy-3-oxobutyl phosphate and 5-amino-6-(D-ribitylamino)uracil: step 1/2. Its function is as follows. Catalyzes the formation of 6,7-dimethyl-8-ribityllumazine by condensation of 5-amino-6-(D-ribitylamino)uracil with 3,4-dihydroxy-2-butanone 4-phosphate. This is the penultimate step in the biosynthesis of riboflavin. Is able to use the non-natural R enantiomer of 3,4-dihydroxy-2-butanone 4-phosphate as a substrate, but with less efficiency than the natural S enantiomer. Cannot use unphosphorylated 3,4-dihydroxy-2-butanone, 3,4-dihydroxy-2-butanone 3-phosphate or diacetyl as substrates. This chain is 6,7-dimethyl-8-ribityllumazine synthase (ribH), found in Bacillus subtilis (strain 168).